We begin with the raw amino-acid sequence, 150 residues long: Ribonuclease H (150 aa).

The RNase H type-1 domain maps to 1–141 (MKSIEVHTDG…VDVLARNQAI (141 aa)). Asp9, Glu47, Asp69, and Asp133 together coordinate Mg(2+).

It belongs to the RNase H family. In terms of assembly, monomer. Mg(2+) serves as cofactor.

It localises to the cytoplasm. It carries out the reaction Endonucleolytic cleavage to 5'-phosphomonoester.. Functionally, endonuclease that specifically degrades the RNA of RNA-DNA hybrids. This is Ribonuclease H from Xanthomonas campestris pv. campestris (strain 8004).